Here is a 474-residue protein sequence, read N- to C-terminus: Aspartate ammonia-lyase (474 aa).

The L-aspartate site is built by Thr105, Ser144, Thr145, Asn146, and Thr191. The SS loop stretch occupies residues 322 to 331 (GSSIMPGKVN). The active-site Proton acceptor is the Ser323. Ser324 and Lys329 together coordinate L-aspartate.

This sequence belongs to the class-II fumarase/aspartase family. Aspartase subfamily. Homotetramer.

It catalyses the reaction L-aspartate = fumarate + NH4(+). Functionally, lyase involved in the degradation of canavanine, the delta-oxa-analog of arginine, allowing growth on canavanine as sole nitrogen and carbon source. Probably catalyzes the conversion of L-aspartate to fumarate and ammonia. This is Aspartate ammonia-lyase from Pseudomonas canavaninivorans.